The chain runs to 128 residues: MNLIQTLEAEEIARLNKTIPDFSAGDTVIVNVNVVEGSRKRVQAYEGVVIAKRNRGLNSGFIVRKISSGEGVERTFQTYSPLIASIEVKRRGDVRRAKLYYLRERSGKSARIKEKLPARTKAAAASAA.

Belongs to the bacterial ribosomal protein bL19 family.

In terms of biological role, this protein is located at the 30S-50S ribosomal subunit interface and may play a role in the structure and function of the aminoacyl-tRNA binding site. The sequence is that of Large ribosomal subunit protein bL19 from Verminephrobacter eiseniae (strain EF01-2).